The following is a 36-amino-acid chain: MMNLLSGWFYILMFYIGVNFPYWMGWSTTAFGFYTP.

This is an uncharacterized protein from Enterobacteria phage T4 (Bacteriophage T4).